The following is a 75-amino-acid chain: Meucin-49 (75 aa).

The first 22 residues, Met1 to Ser22, serve as a signal peptide directing secretion.

This sequence belongs to the non-disulfide-bridged peptide (NDBP) superfamily. Long chain multifunctional peptide (group 2) family. In terms of tissue distribution, expressed by the venom gland.

It localises to the secreted. Its function is as follows. Insecticidal toxin and antimicrobial peptide with potent activity against both Gram-negative and -positive bacteria, as well as against fungi. Acts by disrupting bacterial membrane integrity. Shows broad-spectrum and highly potent bactericidal activities against the Gram-positive bacteria B.cereus, B.megaterium, B.subtilis, M.luteus, S.aureus, S.epidermidis, S.warneri, S.griseus, S.scabiei, S.mutans, S.salivarius, and S.sanguinis. Also exhibits a wide spectrum of activity against the Gram-negative bacteria A.faecalis, E.coli, P.aeruginosa, P.solanacearum, S.enterica, S.marcescens, and S.maltophilia. Also shows antimicrobial activities against the fungal strains Aspergillus flavus, A.fumigatus, A.nidulans, A.niger, Beauveria bassiana, and Saccharomyces cerevisiae. Its antibiotic activity is potentiated by other antibacterial peptides such as MeuNaTxbeta-4. Also induces cytolysis on mice, lizards and birds erythrocytes. The polypeptide is Meucin-49 (Mesobuthus eupeus (Lesser Asian scorpion)).